A 563-amino-acid chain; its full sequence is Arginine--tRNA ligase (563 aa).

The 'HIGH' region signature appears at 121 to 131; it reads PNIAKPFSIGH.

It belongs to the class-I aminoacyl-tRNA synthetase family. As to quaternary structure, monomer.

Its subcellular location is the cytoplasm. The enzyme catalyses tRNA(Arg) + L-arginine + ATP = L-arginyl-tRNA(Arg) + AMP + diphosphate. The chain is Arginine--tRNA ligase from Streptococcus pneumoniae serotype 19F (strain G54).